A 246-amino-acid chain; its full sequence is Ribonuclease 3 (246 aa).

The RNase III domain occupies 16-146; the sequence is ATELEAGIGY…LLAAVYLDGG (131 aa). A Mg(2+)-binding site is contributed by E59. Residue D63 is part of the active site. N132 and E135 together coordinate Mg(2+). E135 is an active-site residue. One can recognise a DRBM domain in the interval 173 to 242; sequence DFKTEFQEMV…ARQVLARFAA (70 aa).

The protein belongs to the ribonuclease III family. Homodimer. Mg(2+) is required as a cofactor.

It localises to the cytoplasm. It catalyses the reaction Endonucleolytic cleavage to 5'-phosphomonoester.. Digests double-stranded RNA. Involved in the processing of primary rRNA transcript to yield the immediate precursors to the large and small rRNAs (23S and 16S). Processes some mRNAs, and tRNAs when they are encoded in the rRNA operon. Processes pre-crRNA and tracrRNA of type II CRISPR loci if present in the organism. The sequence is that of Ribonuclease 3 from Geobacter metallireducens (strain ATCC 53774 / DSM 7210 / GS-15).